Consider the following 446-residue polypeptide: G patch domain-containing protein 4 (446 aa).

Met1 bears the N-acetylmethionine mark. Thr4 is modified (phosphothreonine). Residues 11–57 (GMKFAEEQLLKHGWTQGKGLGRKENGITQALRVTLKQDTHGVGHDPA) enclose the G-patch domain. Residue Lys46 forms a Glycyl lysine isopeptide (Lys-Gly) (interchain with G-Cter in SUMO2) linkage. Thr116 carries the post-translational modification Phosphothreonine. Disordered regions lie at residues 116–140 (TSGG…SKSP) and 188–446 (QDPG…KKRD). Phosphoserine is present on residues Ser128, Ser130, and Ser139. Positions 166–251 (TMKAKLARLE…KKKRRHQEGK (86 aa)) form a coiled coil. Residues 219 to 237 (ASERNDADEKHPEHAEQNI) show a composition bias toward basic and acidic residues. Residues 238-248 (RKSKKKKRRHQ) show a composition bias toward basic residues. Composition is skewed to basic and acidic residues over residues 249-268 (EGKV…KEDA), 297-328 (HHEE…ESRA), 363-375 (REAE…DGRS), and 392-409 (LDVR…ESRA). 2 stretches are compositionally biased toward basic residues: residues 416-427 (RGKRKRQQHPKK) and 437-446 (KAKKKQKKRD).

This chain is G patch domain-containing protein 4 (GPATCH4), found in Homo sapiens (Human).